We begin with the raw amino-acid sequence, 99 residues long: Cobalt transport protein CbiN (99 aa).

Helical transmembrane passes span 6-26 and 68-88; these read VLMIIGIIILTIAPLVMYSGL and SLLFALQAAIGAIIIGYFFGY.

The protein belongs to the CbiN family. As to quaternary structure, forms an energy-coupling factor (ECF) transporter complex composed of an ATP-binding protein (A component, CbiO), a transmembrane protein (T component, CbiQ) and 2 possible substrate-capture proteins (S components, CbiM and CbiN) of unknown stoichimetry.

The protein localises to the cell membrane. Its pathway is cofactor biosynthesis; adenosylcobalamin biosynthesis. Functionally, part of the energy-coupling factor (ECF) transporter complex CbiMNOQ involved in cobalt import. The polypeptide is Cobalt transport protein CbiN (Methanococcus vannielii (strain ATCC 35089 / DSM 1224 / JCM 13029 / OCM 148 / SB)).